Consider the following 217-residue polypeptide: C-type lectin domain family 2 member I (217 aa).

Topologically, residues 1-53 (MPDCLETGEKLFVHNMNAQCVQKPEEGNGPLGTGGKIVQGKCFRIISTVSPVK) are cytoplasmic. A helical; Signal-anchor for type II membrane protein transmembrane segment spans residues 54 to 74 (LYCCYGVIMVLTVAVIALSVA). Residues 75 to 217 (LSTKKTEQII…YNLHCQTPPV (143 aa)) are Extracellular-facing. The cysteines at positions 92 and 103 are disulfide-linked. Residues 99-203 (VGNKCFYFSG…SYINRMWICS (105 aa)) enclose the C-type lectin domain. Asparagine 112 carries N-linked (GlcNAc...) asparagine glycosylation. Cysteine 120 and cysteine 202 are disulfide-bonded.

Detected in osteoblasts, growth plate chondrocytes and skeletal muscle overlying the bone (at protein level). Detected in spleen, B-cells, dendritic cells, thymus, and in IL2-activated natural killer cells.

The protein resides in the cell membrane. Its function is as follows. Inhibits osteoclast formation. Receptor for KLRB1F. Enhances T-cell activation. Plays a role in splenocyte activation, T-cell responses and IL-2 production. In Mus musculus (Mouse), this protein is C-type lectin domain family 2 member I (Clec2i).